The sequence spans 361 residues: DNA replication and repair protein RecF (361 aa).

G30–T37 contacts ATP.

This sequence belongs to the RecF family.

The protein localises to the cytoplasm. The RecF protein is involved in DNA metabolism; it is required for DNA replication and normal SOS inducibility. RecF binds preferentially to single-stranded, linear DNA. It also seems to bind ATP. This Yersinia enterocolitica serotype O:8 / biotype 1B (strain NCTC 13174 / 8081) protein is DNA replication and repair protein RecF.